Reading from the N-terminus, the 338-residue chain is Tetraacyldisaccharide 4'-kinase (338 aa).

49-56 (TVGGTGKT) provides a ligand contact to ATP.

Belongs to the LpxK family.

The catalysed reaction is a lipid A disaccharide + ATP = a lipid IVA + ADP + H(+). It participates in glycolipid biosynthesis; lipid IV(A) biosynthesis; lipid IV(A) from (3R)-3-hydroxytetradecanoyl-[acyl-carrier-protein] and UDP-N-acetyl-alpha-D-glucosamine: step 6/6. Its function is as follows. Transfers the gamma-phosphate of ATP to the 4'-position of a tetraacyldisaccharide 1-phosphate intermediate (termed DS-1-P) to form tetraacyldisaccharide 1,4'-bis-phosphate (lipid IVA). The sequence is that of Tetraacyldisaccharide 4'-kinase from Geobacter metallireducens (strain ATCC 53774 / DSM 7210 / GS-15).